Here is a 339-residue protein sequence, read N- to C-terminus: Phenylalanine--tRNA ligase alpha subunit (339 aa).

A Mg(2+)-binding site is contributed by Glu254.

Belongs to the class-II aminoacyl-tRNA synthetase family. Phe-tRNA synthetase alpha subunit type 1 subfamily. In terms of assembly, tetramer of two alpha and two beta subunits. Mg(2+) serves as cofactor.

It is found in the cytoplasm. The enzyme catalyses tRNA(Phe) + L-phenylalanine + ATP = L-phenylalanyl-tRNA(Phe) + AMP + diphosphate + H(+). This is Phenylalanine--tRNA ligase alpha subunit from Caldanaerobacter subterraneus subsp. tengcongensis (strain DSM 15242 / JCM 11007 / NBRC 100824 / MB4) (Thermoanaerobacter tengcongensis).